We begin with the raw amino-acid sequence, 98 residues long: NADH-ubiquinone oxidoreductase chain 4L (98 aa).

A run of 3 helical transmembrane segments spans residues 1-21 (MPLI…GMLI), 29-49 (SLLC…LMAL), and 61-81 (VVLL…LVSI).

The protein belongs to the complex I subunit 4L family. Core subunit of respiratory chain NADH dehydrogenase (Complex I) which is composed of 45 different subunits.

It localises to the mitochondrion inner membrane. The catalysed reaction is a ubiquinone + NADH + 5 H(+)(in) = a ubiquinol + NAD(+) + 4 H(+)(out). In terms of biological role, core subunit of the mitochondrial membrane respiratory chain NADH dehydrogenase (Complex I) which catalyzes electron transfer from NADH through the respiratory chain, using ubiquinone as an electron acceptor. Part of the enzyme membrane arm which is embedded in the lipid bilayer and involved in proton translocation. The polypeptide is NADH-ubiquinone oxidoreductase chain 4L (MT-ND4L) (Hylobates lar (Lar gibbon)).